Here is a 276-residue protein sequence, read N- to C-terminus: Protein canopy homolog 3 (276 aa).

The signal sequence occupies residues 1-26 (MESMSELAPRCLLFPLLLLLPLLLLP). Residues 47-269 (SKCEVCKYVA…EGVQKASPLP (223 aa)) form the Saposin B-type domain. Cystine bridges form between C49-C206, C52-C194, and C104-C166. N153 carries an N-linked (GlcNAc...) asparagine glycan. Residues 153 to 179 (NETSAEVADLKKQCDVLVEEFEEVIED) adopt a coiled-coil conformation. The tract at residues 218–276 (IASLGGKKSKKKRSGVKGSSSGSSKQRKELGGLGEDANAEEEEGVQKASPLPHSPPDEL) is disordered.

The protein belongs to the canopy family. Interacts with HSP90B1; this interaction is disrupted in the presence of ATP. Interacts with TLR1, TLR2, TLR4 and TLR9. Strongest interaction with TLR4.

The protein resides in the endoplasmic reticulum. Toll-like receptor (TLR)-specific co-chaperone for HSP90B1. Required for proper TLR folding, except that of TLR3, and hence controls TLR exit from the endoplasmic reticulum. Consequently, required for both innate and adaptive immune responses. This is Protein canopy homolog 3 (Cnpy3) from Mus musculus (Mouse).